Reading from the N-terminus, the 43-residue chain is Thymosin beta-12 (43 aa).

2 stretches are compositionally biased toward basic and acidic residues: residues 1–25 and 33–43; these read MSDK…ETQE and ETIEQEKQATA. The segment at 1–43 is disordered; sequence MSDKPDLAEVSNFDKTKLKKTETQEKNPLPTKETIEQEKQATA. N-acetylserine is present on Ser-2.

The protein belongs to the thymosin beta family.

The protein resides in the cytoplasm. Its subcellular location is the cytoskeleton. Functionally, plays an important role in the organization of the cytoskeleton. Binds to and sequesters actin monomers (G actin) and therefore inhibits actin polymerization. The chain is Thymosin beta-12 from Oncorhynchus mykiss (Rainbow trout).